Here is a 230-residue protein sequence, read N- to C-terminus: 3,4-dihydroxy-2-butanone 4-phosphate synthase (230 aa).

D-ribulose 5-phosphate-binding positions include arginine 42–glutamate 43, aspartate 47, arginine 155–threonine 159, and glutamate 179. Glutamate 43 contacts Mg(2+). Histidine 158 provides a ligand contact to Mg(2+).

This sequence belongs to the DHBP synthase family. As to quaternary structure, homodimer. It depends on Mg(2+) as a cofactor. Mn(2+) is required as a cofactor.

The catalysed reaction is D-ribulose 5-phosphate = (2S)-2-hydroxy-3-oxobutyl phosphate + formate + H(+). Its pathway is cofactor biosynthesis; riboflavin biosynthesis; 2-hydroxy-3-oxobutyl phosphate from D-ribulose 5-phosphate: step 1/1. Functionally, catalyzes the conversion of D-ribulose 5-phosphate to formate and 3,4-dihydroxy-2-butanone 4-phosphate. The polypeptide is 3,4-dihydroxy-2-butanone 4-phosphate synthase (Bordetella pertussis (strain Tohama I / ATCC BAA-589 / NCTC 13251)).